Consider the following 264-residue polypeptide: Teichoic acids export ATP-binding protein TagH (264 aa).

The 220-residue stretch at 24–243 (IKDALIPKNK…YEAFLKTFKK (220 aa)) folds into the ABC transporter domain. Residue 57–64 (GINGSGKS) participates in ATP binding.

This sequence belongs to the ABC transporter superfamily. Teichoic acids exporter (TC 3.A.1.104.1) family. The complex is composed of two ATP-binding proteins (TagH) and two transmembrane proteins (TagG).

It localises to the cell membrane. The catalysed reaction is ATP + H2O + teichoic acidSide 1 = ADP + phosphate + teichoic acidSide 2.. In terms of biological role, part of the ABC transporter complex TagGH involved in teichoic acids export. Responsible for energy coupling to the transport system. This Staphylococcus epidermidis (strain ATCC 35984 / DSM 28319 / BCRC 17069 / CCUG 31568 / BM 3577 / RP62A) protein is Teichoic acids export ATP-binding protein TagH.